A 219-amino-acid polypeptide reads, in one-letter code: Elongation factor Ts (219 aa).

Residues 82–85 (TDFV) are involved in Mg(2+) ion dislocation from EF-Tu.

The protein belongs to the EF-Ts family.

It localises to the cytoplasm. Functionally, associates with the EF-Tu.GDP complex and induces the exchange of GDP to GTP. It remains bound to the aminoacyl-tRNA.EF-Tu.GTP complex up to the GTP hydrolysis stage on the ribosome. The sequence is that of Elongation factor Ts from Anaeromyxobacter sp. (strain Fw109-5).